We begin with the raw amino-acid sequence, 70 residues long: Melittin (70 aa).

A signal peptide spans 1–21; the sequence is MKFLVNVALVFMVVYISFIYA. Residues 22-43 constitute a propeptide, removed by a dipeptidylpeptidase; the sequence is APEPEPAPEAEAEADAEADPEA. N-formylglycine; partial is present on G44. Q69 is modified (glutamine amide).

The protein belongs to the melittin family. Monomer (in solution and for integration into membranes), homotetramer (in solution and potentially as a toroidal pore in membranes), and potenially homomultimer (as a toroidal pore in membranes). As to expression, expressed by the venom gland.

The protein localises to the secreted. Its subcellular location is the target cell membrane. Functionally, main toxin of bee venom with strong hemolytic activity and antimicrobial activity. It has enhancing effects on bee venom phospholipase A2 activity. This amphipathic toxin binds to negatively charged membrane surface and forms pore by inserting into lipid bilayers inducing the leakage of ions and molecules and the enhancement of permeability that ultimately leads to cell lysis. It acts as a voltage-gated pore with higher selectivity for anions over cations. The ion conductance has been shown to be voltage-dependent. Self-association of melittin in membranes is promoted by high ionic strength, but not by the presence of negatively charged lipids. In vivo, intradermal injection into healthy human volunteers produce sharp pain sensation and an inflammatory response. It produces pain by activating primary nociceptor cells directly and indirectly due to its ability to activate plasma membrane phospholipase A2 and its pore-forming activity. This Apis cerana cerana (Oriental honeybee) protein is Melittin (MELT).